Reading from the N-terminus, the 806-residue chain is Putative phage-related protein YobO (806 aa).

Residues 1 to 23 form a disordered region; sequence MVHFKNCPDPSLNANSQSHPEFS. A compositionally biased stretch (polar residues) spans 12 to 21; sequence LNANSQSHPE. PbH1 repeat units follow at residues 199-221, 237-259, 260-292, 294-315, 419-441, and 448-470; these read VEYG…DITS, SRYI…TTHY, SEYI…EIDD, SRHV…EVKA, SQNI…DINL, and TDYI…SIGG.

The polypeptide is Putative phage-related protein YobO (yobO) (Bacillus subtilis (strain 168)).